A 159-amino-acid polypeptide reads, in one-letter code: SsrA-binding protein (159 aa).

This sequence belongs to the SmpB family.

The protein localises to the cytoplasm. Functionally, required for rescue of stalled ribosomes mediated by trans-translation. Binds to transfer-messenger RNA (tmRNA), required for stable association of tmRNA with ribosomes. tmRNA and SmpB together mimic tRNA shape, replacing the anticodon stem-loop with SmpB. tmRNA is encoded by the ssrA gene; the 2 termini fold to resemble tRNA(Ala) and it encodes a 'tag peptide', a short internal open reading frame. During trans-translation Ala-aminoacylated tmRNA acts like a tRNA, entering the A-site of stalled ribosomes, displacing the stalled mRNA. The ribosome then switches to translate the ORF on the tmRNA; the nascent peptide is terminated with the 'tag peptide' encoded by the tmRNA and targeted for degradation. The ribosome is freed to recommence translation, which seems to be the essential function of trans-translation. In Dichelobacter nodosus (strain VCS1703A), this protein is SsrA-binding protein.